Here is a 104-residue protein sequence, read N- to C-terminus: Conantokin-P (104 aa).

An N-terminal signal peptide occupies residues 1-26 (MQLYTYLYLLVPLVTFHLILSTGTLA). Positions 27–80 (HGGTLTERRSTDTTALKPEPVLLQKSDARSTDDNDKDRLTQMKRILKKRGNKAR) are excised as a propeptide. A disordered region spans residues 29-87 (GTLTERRSTDTTALKPEPVLLQKSDARSTDDNDKDRLTQMKRILKKRGNKARGEEEHSK). Positions 52-66 (SDARSTDDNDKDRLT) are enriched in basic and acidic residues. 4-carboxyglutamate occurs at positions 83, 84, 90, 94, and 103. The a divalent metal cation site is built by Glu-90 and Glu-94. A disulfide bridge links Cys-91 with Cys-104.

Belongs to the conotoxin B superfamily. As to expression, expressed by the venom duct.

It localises to the secreted. Conantokins inhibit N-methyl-D-aspartate (NMDA) receptors. This toxin has the highest potency for the NR2B/GRIN2B subunit, followed by NR2A/GRIN2A, NR2C/GRIN2C, and NR2D/GRIN2D subunits. This chain is Conantokin-P, found in Conus purpurascens (Purple cone).